A 207-amino-acid chain; its full sequence is Ras-related protein RABH1e (207 aa).

16–23 is a binding site for GTP; the sequence is GDQSVGKT. Residues 38-46 carry the Effector region motif; the sequence is YQATIGIDF. Residues 64–68, 122–125, and 152–153 contribute to the GTP site; these read DTAGQ, NKTD, and SA. S-geranylgeranyl cysteine attachment occurs at residues C205 and C207. The residue at position 207 (C207) is a Cysteine methyl ester.

The protein belongs to the small GTPase superfamily. Rab family.

Its subcellular location is the golgi apparatus membrane. Functionally, protein transport. Regulator of membrane traffic from the Golgi apparatus towards the endoplasmic reticulum (ER). This chain is Ras-related protein RABH1e (RABH1E), found in Arabidopsis thaliana (Mouse-ear cress).